Reading from the N-terminus, the 605-residue chain is Acetoin dehydrogenase operon transcriptional activator AcoR (605 aa).

In terms of domain architecture, Sigma-54 factor interaction spans 295–520 (VIGQSGRSQA…LFNVFERLSI (226 aa)). ATP-binding positions include 323 to 330 (GETGTGKE) and 387 to 396 (ANQGTLFLDE). The H-T-H motif DNA-binding region spans 578-597 (VSQAAKISGIPRSTFYKRLK).

Functionally, acts as a transcriptional activator of the acoABCL operon encoding the acetoin dehydrogenase complex. The sequence is that of Acetoin dehydrogenase operon transcriptional activator AcoR (acoR) from Bacillus subtilis (strain 168).